A 452-amino-acid polypeptide reads, in one-letter code: MNIFGTDGVRGRANVYPMDPITVLRLGMAIGLEARKVGTQVVLGKDTRISGYMVESALVSGLVAMGVNVGLLGPMPTAAIATLVRNLRASMGVVISASHNSYLDNGVKIFDSEGIKIPLELEEVLESNVRAELSSDLAQVRGMGKVYRIAGAVGRYIEFVKGTFPKRLKLSGMKIVVDCANGAAYHIGGEVFWELGADVVVIGNKPDGLNINHNCGSLHPEGMVQKVLEEGADIGIALDGDADRVVVCDEKGRLVDGDQVIASIMRHLRATKSITDAAVTTMSSKSIDSYARELGVRLHRSEVGDRHLVDTMRRHSCSVGGEKSGHIILWEHSTTSDSLVAALQILSIMLLENKSASSIFGDFVPMPRVHRDIPYSMEFDHIARLIGPTLSDVEQALGRVNGRVIFRRSGTERLIRCVIEGEDPKLVALVADELSIKLRELGVENGVEPEMQ.

Ser-98 serves as the catalytic Phosphoserine intermediate. Ser-98, Asp-239, Asp-241, and Asp-243 together coordinate Mg(2+). Position 98 is a phosphoserine (Ser-98).

Belongs to the phosphohexose mutase family. The cofactor is Mg(2+). Post-translationally, activated by phosphorylation.

The catalysed reaction is alpha-D-glucosamine 1-phosphate = D-glucosamine 6-phosphate. In terms of biological role, catalyzes the conversion of glucosamine-6-phosphate to glucosamine-1-phosphate. The polypeptide is Phosphoglucosamine mutase (Anaplasma marginale (strain St. Maries)).